Reading from the N-terminus, the 399-residue chain is Peroxisome assembly protein 12 (399 aa).

Positions 1-24 (MSFYSNLPSAGQSSRGSSTSGRNG) are disordered. At 1-33 (MSFYSNLPSAGQSSRGSSTSGRNGVGLEPLYPT) the chain is on the peroxisomal matrix side. Residues 9–24 (SAGQSSRGSSTSGRNG) are compositionally biased toward low complexity. A helical transmembrane segment spans residues 34–62 (IFEIMSSQEIDSLLPASIRYLLANHLVAN). The Cytoplasmic portion of the chain corresponds to 63-67 (FPNRY). A helical transmembrane segment spans residues 68 to 92 (TLRLNKYFFEWFQAIKGFVEWYHLK). Over 93–136 (TYNSTFIDRFYGLQLFSSRDRNLALTQCLNPKGQSEWPQGLQLN) the chain is Peroxisomal matrix. A helical transmembrane segment spans residues 137–168 (QQQKSVIFLEKIILPYITAKLDEILEKISMNN). The Cytoplasmic portion of the chain corresponds to 169 to 171 (IFS). Residues 172-208 (SDETENKWPKRAFLRIYPFIKKLLALSNLLVKLLFLT) traverse the membrane as a helical segment. The Peroxisomal matrix segment spans residues 209–277 (KRTGSVSLLQ…PRFLTFMGSQ (69 aa)). The chain crosses the membrane as a helical span at residues 278 to 305 (FFPTFIFVLRVYQWWTTQDMTTKLQKRV). Residues 306–399 (NDLDEDIPRP…VVTGIRKLLI (94 aa)) are Cytoplasmic-facing. Positions 334, 337, 354, and 357 each coordinate Zn(2+). Residues 334-373 (CPVCEKTVQNPCVLETGYVACYPCAISYLVNNEGHCPVTN) form an RING-type; degenerate zinc finger.

The protein belongs to the pex2/pex10/pex12 family. Component of the PEX2-PEX10-PEX12 retrotranslocation channel, composed of PEX2, PEX10 and PEX12.

It localises to the peroxisome membrane. The protein operates within protein modification; protein ubiquitination. Its function is as follows. Component of a retrotranslocation channel required for peroxisome organization by mediating export of the PEX5 receptor from peroxisomes to the cytosol, thereby promoting PEX5 recycling. The retrotranslocation channel is composed of PEX2, PEX10 and PEX12; each subunit contributing transmembrane segments that coassemble into an open channel that specifically allows the passage of PEX5 through the peroxisomal membrane. PEX12 also regulates PEX5 recycling by activating the E3 ubiquitin-protein ligase activity of PEX10. When PEX5 recycling is compromised, PEX12 stimulates PEX10-mediated polyubiquitination of PEX5, leading to its subsequent degradation. In Saccharomyces cerevisiae (strain ATCC 204508 / S288c) (Baker's yeast), this protein is Peroxisome assembly protein 12.